Consider the following 164-residue polypeptide: Small ribosomal subunit protein uS5 (164 aa).

The region spanning 10–73 (LEERVVAINR…EAAKKNLIEV (64 aa)) is the S5 DRBM domain.

This sequence belongs to the universal ribosomal protein uS5 family. As to quaternary structure, part of the 30S ribosomal subunit. Contacts proteins S4 and S8.

In terms of biological role, with S4 and S12 plays an important role in translational accuracy. Its function is as follows. Located at the back of the 30S subunit body where it stabilizes the conformation of the head with respect to the body. The sequence is that of Small ribosomal subunit protein uS5 from Streptococcus thermophilus (strain CNRZ 1066).